The following is a 288-amino-acid chain: ATP synthase gamma chain (288 aa).

This sequence belongs to the ATPase gamma chain family. As to quaternary structure, F-type ATPases have 2 components, CF(1) - the catalytic core - and CF(0) - the membrane proton channel. CF(1) has five subunits: alpha(3), beta(3), gamma(1), delta(1), epsilon(1). CF(0) has three main subunits: a, b and c.

It is found in the cell inner membrane. Functionally, produces ATP from ADP in the presence of a proton gradient across the membrane. The gamma chain is believed to be important in regulating ATPase activity and the flow of protons through the CF(0) complex. The polypeptide is ATP synthase gamma chain (Vibrio cholerae serotype O1 (strain ATCC 39541 / Classical Ogawa 395 / O395)).